We begin with the raw amino-acid sequence, 407 residues long: Melanoma-associated antigen B6B (407 aa).

Over residues 1-16 the composition is skewed to basic residues; the sequence is MPRGQKSKLRARGKRR. Residues 1–185 form a disordered region; it reads MPRGQKSKLR…ESLSSSKRAA (185 aa). Polar residues-rich tracts occupy residues 56–68 and 94–109; these read SGSS…QGAS and PSTS…SQGA. Over residues 123 to 132 the composition is skewed to basic and acidic residues; the sequence is KSDEAAKGQN. The span at 133–155 shows a compositional bias: polar residues; sequence EKSPSTSRDASVPQESQGASPTG. In terms of domain architecture, MAGE spans 195–394; it reads IKRKANKMVQ…GLYPHLYEDA (200 aa).

The protein is Melanoma-associated antigen B6B of Homo sapiens (Human).